We begin with the raw amino-acid sequence, 145 residues long: D-aminoacyl-tRNA deacylase (145 aa).

A Gly-cisPro motif, important for rejection of L-amino acids motif is present at residues 137–138 (GP).

It belongs to the DTD family. Homodimer.

The protein localises to the cytoplasm. The enzyme catalyses glycyl-tRNA(Ala) + H2O = tRNA(Ala) + glycine + H(+). It carries out the reaction a D-aminoacyl-tRNA + H2O = a tRNA + a D-alpha-amino acid + H(+). Functionally, an aminoacyl-tRNA editing enzyme that deacylates mischarged D-aminoacyl-tRNAs. Also deacylates mischarged glycyl-tRNA(Ala), protecting cells against glycine mischarging by AlaRS. Acts via tRNA-based rather than protein-based catalysis; rejects L-amino acids rather than detecting D-amino acids in the active site. By recycling D-aminoacyl-tRNA to D-amino acids and free tRNA molecules, this enzyme counteracts the toxicity associated with the formation of D-aminoacyl-tRNA entities in vivo and helps enforce protein L-homochirality. This chain is D-aminoacyl-tRNA deacylase, found in Alteromonas mediterranea (strain DSM 17117 / CIP 110805 / LMG 28347 / Deep ecotype).